The sequence spans 250 residues: Protein KPLCE (250 aa).

As to expression, skin-specific.

The sequence is that of Protein KPLCE from Homo sapiens (Human).